Here is a 369-residue protein sequence, read N- to C-terminus: Flagellar P-ring protein (369 aa).

The first 24 residues, 1–24 (MSKTISLLKFIICILISLCSFTYA), serve as a signal peptide directing secretion.

It belongs to the FlgI family. As to quaternary structure, the basal body constitutes a major portion of the flagellar organelle and consists of four rings (L,P,S, and M) mounted on a central rod.

The protein localises to the bacterial flagellum basal body. Functionally, assembles around the rod to form the L-ring and probably protects the motor/basal body from shearing forces during rotation. The polypeptide is Flagellar P-ring protein (Buchnera aphidicola subsp. Schizaphis graminum (strain Sg)).